Consider the following 266-residue polypeptide: Thymidylate synthase (266 aa).

R24 serves as a coordination point for dUMP. H54 provides a ligand contact to (6R)-5,10-methylene-5,6,7,8-tetrahydrofolate. 129–130 (RR) contributes to the dUMP binding site. The active-site Nucleophile is C149. Residues 169–172 (RSAD), N180, and 210–212 (HIY) contribute to the dUMP site. D172 lines the (6R)-5,10-methylene-5,6,7,8-tetrahydrofolate pocket. A265 serves as a coordination point for (6R)-5,10-methylene-5,6,7,8-tetrahydrofolate.

It belongs to the thymidylate synthase family. Bacterial-type ThyA subfamily. Homodimer.

The protein resides in the cytoplasm. The enzyme catalyses dUMP + (6R)-5,10-methylene-5,6,7,8-tetrahydrofolate = 7,8-dihydrofolate + dTMP. It participates in pyrimidine metabolism; dTTP biosynthesis. Its function is as follows. Catalyzes the reductive methylation of 2'-deoxyuridine-5'-monophosphate (dUMP) to 2'-deoxythymidine-5'-monophosphate (dTMP) while utilizing 5,10-methylenetetrahydrofolate (mTHF) as the methyl donor and reductant in the reaction, yielding dihydrofolate (DHF) as a by-product. This enzymatic reaction provides an intracellular de novo source of dTMP, an essential precursor for DNA biosynthesis. This Mycobacterium ulcerans (strain Agy99) protein is Thymidylate synthase.